The chain runs to 100 residues: Urease subunit gamma (100 aa).

The protein belongs to the urease gamma subunit family. In terms of assembly, heterotrimer of UreA (gamma), UreB (beta) and UreC (alpha) subunits. Three heterotrimers associate to form the active enzyme.

Its subcellular location is the cytoplasm. It carries out the reaction urea + 2 H2O + H(+) = hydrogencarbonate + 2 NH4(+). It functions in the pathway nitrogen metabolism; urea degradation; CO(2) and NH(3) from urea (urease route): step 1/1. The protein is Urease subunit gamma of Pseudomonas fluorescens (strain ATCC BAA-477 / NRRL B-23932 / Pf-5).